A 471-amino-acid chain; its full sequence is Abscisic acid 8'-hydroxylase 1 (471 aa).

Residues 1–21 (MGAFLLFVCVLAPFLLVCAVR) traverse the membrane as a helical segment. Cys-415 provides a ligand contact to heme.

The protein belongs to the cytochrome P450 family. Requires heme as cofactor. As to expression, in seedlings and expanding leaves.

The protein resides in the membrane. The catalysed reaction is 2-cis-(+)-abscisate + reduced [NADPH--hemoprotein reductase] + O2 = (+)-8'-hydroxyabscisate + oxidized [NADPH--hemoprotein reductase] + H2O + H(+). It participates in plant hormone degradation; abscisic acid degradation. In terms of biological role, involved in the oxidative degradation of abscisic acid. The protein is Abscisic acid 8'-hydroxylase 1 (CYP707A5) of Oryza sativa subsp. indica (Rice).